Here is a 208-residue protein sequence, read N- to C-terminus: Exosome complex component CSL4 homolog (208 aa).

Component of the RNA exosome complex. In terms of tissue distribution, ubiquitously expressed.

The protein resides in the nucleus. It is found in the nucleolus. The protein localises to the nucleoplasm. Non-catalytic component of the RNA exosome complex which has 3'-&gt;5' exoribonuclease activity and participates in a multitude of cellular RNA processing and degradation events. Involved in regulation of antisense ribosomal siRNA production. Involved in response to cold-warm shock. The polypeptide is Exosome complex component CSL4 homolog (Caenorhabditis elegans).